We begin with the raw amino-acid sequence, 299 residues long: MAPTAKTNKGDTKTAAAKPAEKKAAPAAAAAKGKVEKPKAEAAKPAAAAAKNVKKASEAAKDVKAAAAAAKPAAAKPAAAKPAAASKDAGKKAPAAAAPKKDAKAAAAPAPAKAAPAKKAASTPAAAPPAKKAAPAKAAAPAAAAPAPAAAAPAVAKPAPKPKAKAAPAPSKVVKKNVLRGKGQKKKKVSLRFTIDCTNIAEDSIMDVADFEKYIKARLKVNGKVNNLGNNVTFERSKLKLIVSSDVHFSKAYLKYLTKKYLKKNSLRDWIRVVANEKDSYELRYFRISSNDDEDDDAE.

Disordered stretches follow at residues 1-142 and 155-178; these read MAPT…AAPA and VAKP…KKNV. Composition is skewed to basic and acidic residues over residues 33-42 and 55-64; these read GKVEKPKAEA and KASEAAKDVK. Composition is skewed to low complexity over residues 65–98 and 105–142; these read AAAA…AAAA and AAAA…AAPA.

Belongs to the eukaryotic ribosomal protein eL22 family.

The chain is Large ribosomal subunit protein eL22 (RpL22) from Drosophila melanogaster (Fruit fly).